The primary structure comprises 423 residues: Sorting nexin-4 (423 aa).

Residues Met-1–Pro-21 are compositionally biased toward basic and acidic residues. The segment at Met-1–Pro-25 is disordered. Residues Glu-29 to Ser-157 enclose the PX domain. The a 1,2-diacyl-sn-glycero-3-phospho-(1D-myo-inositol-3-phosphate) site is built by Arg-78, Ser-80, Lys-104, and Arg-123. Coiled-coil stretches lie at residues Lys-217 to Lys-252 and Ser-346 to Lys-381.

Belongs to the sorting nexin family. In terms of assembly, forms a complex with ATG20 and ATG17. Binds also to SNC1 and SNX41.

The protein resides in the cytoplasm. Its subcellular location is the cytosol. The protein localises to the preautophagosomal structure membrane. It localises to the endosome membrane. Sorting nexin, involved in the separation or division of vacuoles throughout the entire life cycle of the cells. Involved in retrieval of late-Golgi SNAREs from post-Golgi endosomes to the trans-Golgi network, for cytoplasm to vacuole transport (Cvt), and autophagy of large cargos including mitophagy, pexophagy and glycophagy. Involved in proper sorting of the v-SNARE protein SNC1. The protein is Sorting nexin-4 of Saccharomyces cerevisiae (strain ATCC 204508 / S288c) (Baker's yeast).